Consider the following 110-residue polypeptide: METIAKHRYARTSAQKARLVADLIRGKKVAQALEILTYTNKKASALVKKVLESAIANAEHNDGADIDDLKVAKIFVDEGPSMKRVMPRAKGRADRILKRTSHITVVVSDR.

It belongs to the universal ribosomal protein uL22 family. Part of the 50S ribosomal subunit.

Functionally, this protein binds specifically to 23S rRNA; its binding is stimulated by other ribosomal proteins, e.g. L4, L17, and L20. It is important during the early stages of 50S assembly. It makes multiple contacts with different domains of the 23S rRNA in the assembled 50S subunit and ribosome. In terms of biological role, the globular domain of the protein is located near the polypeptide exit tunnel on the outside of the subunit, while an extended beta-hairpin is found that lines the wall of the exit tunnel in the center of the 70S ribosome. This chain is Large ribosomal subunit protein uL22, found in Aggregatibacter actinomycetemcomitans (Actinobacillus actinomycetemcomitans).